Here is a 151-residue protein sequence, read N- to C-terminus: Transcription antitermination protein NusB (151 aa).

It belongs to the NusB family.

Functionally, involved in transcription antitermination. Required for transcription of ribosomal RNA (rRNA) genes. Binds specifically to the boxA antiterminator sequence of the ribosomal RNA (rrn) operons. The polypeptide is Transcription antitermination protein NusB (Thermus thermophilus (strain ATCC BAA-163 / DSM 7039 / HB27)).